Here is a 672-residue protein sequence, read N- to C-terminus: Acetoacetyl-CoA synthetase (672 aa).

It belongs to the ATP-dependent AMP-binding enzyme family.

The protein localises to the cytoplasm. It localises to the cytosol. It carries out the reaction acetoacetate + ATP + CoA = acetoacetyl-CoA + AMP + diphosphate. In terms of biological role, converts acetoacetate to acetoacetyl-CoA in the cytosol. Ketone body-utilizing enzyme, responsible for the synthesis of cholesterol and fatty acids. The protein is Acetoacetyl-CoA synthetase (AACS) of Macaca fascicularis (Crab-eating macaque).